We begin with the raw amino-acid sequence, 576 residues long: Cyclic nucleotide-binding domain-containing protein 2 (576 aa).

116 to 239 (SYRNYAEPLQ…DAQYRFEFFR (124 aa)) is a binding site for a nucleoside 3',5'-cyclic phosphate.

The protein resides in the cytoplasm. It localises to the cytosol. Functionally, essential for male fertility. Plays an important role in spermatogenesis and regulates sperm motility by controlling the development of the flagellar bending of sperm. The protein is Cyclic nucleotide-binding domain-containing protein 2 (CNBD2) of Homo sapiens (Human).